The primary structure comprises 60 residues: Large ribosomal subunit protein bL32 (60 aa).

The span at 1–20 (MAKPARHTSKAKRNKRRTHY) shows a compositional bias: basic residues. The interval 1 to 22 (MAKPARHTSKAKRNKRRTHYKL) is disordered.

It belongs to the bacterial ribosomal protein bL32 family.

In Streptococcus agalactiae serotype V (strain ATCC BAA-611 / 2603 V/R), this protein is Large ribosomal subunit protein bL32.